A 250-amino-acid chain; its full sequence is HLA class II histocompatibility antigen, DO alpha chain (250 aa).

A signal peptide spans Met-1–Ala-25. The segment at Thr-26–Asn-110 is alpha-1. The Extracellular portion of the chain corresponds to Thr-26–Glu-217. Residues Asn-104 and Asn-144 are each glycosylated (N-linked (GlcNAc...) asparagine). Residues Val-111–Trp-204 form an alpha-2 region. Residues Pro-113 to Glu-205 enclose the Ig-like C1-type domain. Cys-133 and Cys-189 are joined by a disulfide. Residues Glu-205–Glu-217 are connecting peptide. The helical transmembrane segment at Thr-218–Ile-240 threads the bilayer. The Cytoplasmic segment spans residues Met-241 to Arg-250.

Belongs to the MHC class II family. In terms of assembly, heterodimer of an alpha chain (DOA) and a beta chain (DOB). Forms a heterotetrameric complex with an HLA-DM molecule during intracellular transport in endosomal/lysosomal compartments in B-cells.

It localises to the endosome membrane. The protein localises to the lysosome membrane. Important modulator in the HLA class II restricted antigen presentation pathway by interaction with the HLA-DM molecule in B-cells. Modifies peptide exchange activity of HLA-DM. The sequence is that of HLA class II histocompatibility antigen, DO alpha chain (HLA-DOA) from Homo sapiens (Human).